The sequence spans 424 residues: Serpin A11 (424 aa).

The first 21 residues, 1–21, serve as a signal peptide directing secretion; the sequence is MGPVWLWLWLLVAEVLLPVHC. Asn108, Asn171, Asn352, and Asn387 each carry an N-linked (GlcNAc...) asparagine glycan.

Belongs to the serpin family.

The protein localises to the secreted. This Mus musculus (Mouse) protein is Serpin A11 (Serpina11).